The sequence spans 331 residues: Threonine-phosphate decarboxylase (331 aa).

N6-(pyridoxal phosphate)lysine is present on K192.

The protein belongs to the class-I pyridoxal-phosphate-dependent aminotransferase family. In terms of assembly, homodimer. Pyridoxal 5'-phosphate is required as a cofactor.

It is found in the cytoplasm. The enzyme catalyses O-phospho-L-threonine + H(+) = (R)-1-aminopropan-2-yl phosphate + CO2. The protein operates within cofactor biosynthesis; adenosylcobalamin biosynthesis. Its function is as follows. Decarboxylates L-threonine-O-3-phosphate to yield (R)-1-amino-2-propanol O-2-phosphate, the precursor for the linkage between the nucleotide loop and the corrin ring in cobalamin. This chain is Threonine-phosphate decarboxylase (cobC), found in Pseudomonas aeruginosa (strain ATCC 15692 / DSM 22644 / CIP 104116 / JCM 14847 / LMG 12228 / 1C / PRS 101 / PAO1).